A 406-amino-acid polypeptide reads, in one-letter code: Dual-specificity RNA methyltransferase RlmN (406 aa).

The Proton acceptor role is filled by Glu-119. In terms of domain architecture, Radical SAM core spans 125 to 370; the sequence is DKGRGTLCVS…AMVRRTRGDD (246 aa). Cys-132 and Cys-375 are joined by a disulfide. [4Fe-4S] cluster contacts are provided by Cys-139, Cys-143, and Cys-146. Residues 192-193, Ser-224, 246-248, and Asn-332 each bind S-adenosyl-L-methionine; these read GE and SLH. The active-site S-methylcysteine intermediate is Cys-375.

The protein belongs to the radical SAM superfamily. RlmN family. [4Fe-4S] cluster serves as cofactor.

The protein resides in the cytoplasm. The catalysed reaction is adenosine(2503) in 23S rRNA + 2 reduced [2Fe-2S]-[ferredoxin] + 2 S-adenosyl-L-methionine = 2-methyladenosine(2503) in 23S rRNA + 5'-deoxyadenosine + L-methionine + 2 oxidized [2Fe-2S]-[ferredoxin] + S-adenosyl-L-homocysteine. The enzyme catalyses adenosine(37) in tRNA + 2 reduced [2Fe-2S]-[ferredoxin] + 2 S-adenosyl-L-methionine = 2-methyladenosine(37) in tRNA + 5'-deoxyadenosine + L-methionine + 2 oxidized [2Fe-2S]-[ferredoxin] + S-adenosyl-L-homocysteine. Its function is as follows. Specifically methylates position 2 of adenine 2503 in 23S rRNA and position 2 of adenine 37 in tRNAs. m2A2503 modification seems to play a crucial role in the proofreading step occurring at the peptidyl transferase center and thus would serve to optimize ribosomal fidelity. The sequence is that of Dual-specificity RNA methyltransferase RlmN from Xylella fastidiosa (strain M12).